The chain runs to 469 residues: Putative dipeptidase SAUSA300_1697 (469 aa).

His-84 is a binding site for Zn(2+). Residue Asp-86 is part of the active site. Asp-115 lines the Zn(2+) pocket. The active-site Proton acceptor is the Glu-149. Zn(2+)-binding residues include Glu-150, Asp-173, and His-440.

Belongs to the peptidase M20A family. Requires Zn(2+) as cofactor.

The sequence is that of Putative dipeptidase SAUSA300_1697 from Staphylococcus aureus (strain USA300).